We begin with the raw amino-acid sequence, 342 residues long: Holliday junction branch migration complex subunit RuvB (342 aa).

Residues 1–185 (MREDYLKSDD…FGINARLEYY (185 aa)) are large ATPase domain (RuvB-L). ATP contacts are provided by residues L24, R25, G66, K69, T70, T71, 132 to 134 (EDY), R175, Y185, and R222. Mg(2+) is bound at residue T70. The segment at 186–256 (DAKLLTRIVQ…IARIALQALN (71 aa)) is small ATPAse domain (RuvB-S). The segment at 259-342 (HNGLDDMDNR…PPAQSGTLFE (84 aa)) is head domain (RuvB-H). Positions 314 and 319 each coordinate DNA.

The protein belongs to the RuvB family. As to quaternary structure, homohexamer. Forms an RuvA(8)-RuvB(12)-Holliday junction (HJ) complex. HJ DNA is sandwiched between 2 RuvA tetramers; dsDNA enters through RuvA and exits via RuvB. An RuvB hexamer assembles on each DNA strand where it exits the tetramer. Each RuvB hexamer is contacted by two RuvA subunits (via domain III) on 2 adjacent RuvB subunits; this complex drives branch migration. In the full resolvosome a probable DNA-RuvA(4)-RuvB(12)-RuvC(2) complex forms which resolves the HJ.

It is found in the cytoplasm. The catalysed reaction is ATP + H2O = ADP + phosphate + H(+). In terms of biological role, the RuvA-RuvB-RuvC complex processes Holliday junction (HJ) DNA during genetic recombination and DNA repair, while the RuvA-RuvB complex plays an important role in the rescue of blocked DNA replication forks via replication fork reversal (RFR). RuvA specifically binds to HJ cruciform DNA, conferring on it an open structure. The RuvB hexamer acts as an ATP-dependent pump, pulling dsDNA into and through the RuvAB complex. RuvB forms 2 homohexamers on either side of HJ DNA bound by 1 or 2 RuvA tetramers; 4 subunits per hexamer contact DNA at a time. Coordinated motions by a converter formed by DNA-disengaged RuvB subunits stimulates ATP hydrolysis and nucleotide exchange. Immobilization of the converter enables RuvB to convert the ATP-contained energy into a lever motion, pulling 2 nucleotides of DNA out of the RuvA tetramer per ATP hydrolyzed, thus driving DNA branch migration. The RuvB motors rotate together with the DNA substrate, which together with the progressing nucleotide cycle form the mechanistic basis for DNA recombination by continuous HJ branch migration. Branch migration allows RuvC to scan DNA until it finds its consensus sequence, where it cleaves and resolves cruciform DNA. In Cytophaga hutchinsonii (strain ATCC 33406 / DSM 1761 / CIP 103989 / NBRC 15051 / NCIMB 9469 / D465), this protein is Holliday junction branch migration complex subunit RuvB.